A 277-amino-acid polypeptide reads, in one-letter code: Large ribosomal subunit protein uL2 (277 aa).

A disordered region spans residues 199–277 (DHMNTSVGKA…ILISRHKRKK (79 aa)). The segment covering 209–220 (GRTRWMGRRPHN) has biased composition (basic residues).

Belongs to the universal ribosomal protein uL2 family. As to quaternary structure, part of the 50S ribosomal subunit. Forms a bridge to the 30S subunit in the 70S ribosome.

In terms of biological role, one of the primary rRNA binding proteins. Required for association of the 30S and 50S subunits to form the 70S ribosome, for tRNA binding and peptide bond formation. It has been suggested to have peptidyltransferase activity; this is somewhat controversial. Makes several contacts with the 16S rRNA in the 70S ribosome. The chain is Large ribosomal subunit protein uL2 from Nitrobacter winogradskyi (strain ATCC 25391 / DSM 10237 / CIP 104748 / NCIMB 11846 / Nb-255).